A 432-amino-acid polypeptide reads, in one-letter code: Cyclic 2,3-diphosphoglycerate synthetase (432 aa).

This sequence belongs to the cyclic 2,3-diphosphoglycerate synthetase family.

It localises to the cytoplasm. The catalysed reaction is (2R)-2,3-bisphosphoglycerate + ATP + H(+) = cyclic (2R)-2,3-bisphosphoglycerate + ADP + phosphate. Functionally, catalyzes the formation of cyclic 2,3-diphosphoglycerate (cDPG) by formation of an intramolecular phosphoanhydride bond at the expense of ATP. The sequence is that of Cyclic 2,3-diphosphoglycerate synthetase from Thermococcus onnurineus (strain NA1).